Here is a 210-residue protein sequence, read N- to C-terminus: Somatotropin-1 (210 aa).

Residues 1–22 (MGQVFLLMPVLLASCFLSQGAA) form the signal peptide. His-38 is a binding site for Zn(2+). Cys-71 and Cys-183 form a disulfide bridge. Glu-192 contributes to the Zn(2+) binding site. Cys-200 and Cys-208 are disulfide-bonded.

This sequence belongs to the somatotropin/prolactin family.

It localises to the secreted. Its function is as follows. Growth hormone plays an important role in growth control and is involved in the regulation of several anabolic processes. Implicated as an osmoregulatory substance important for seawater adaptation. The chain is Somatotropin-1 (gh1) from Oncorhynchus nerka (Sockeye salmon).